The chain runs to 465 residues: Cysteine--tRNA ligase (465 aa).

Cys29 serves as a coordination point for Zn(2+). A 'HIGH' region motif is present at residues 31 to 41 (PTVYNYIHIGN). Residues Cys209, His234, and Glu238 each coordinate Zn(2+). A 'KMSKS' region motif is present at residues 266 to 270 (KMSKS). Lys269 provides a ligand contact to ATP. Ser270 is subject to Phosphoserine.

It belongs to the class-I aminoacyl-tRNA synthetase family. Monomer. Zn(2+) serves as cofactor.

The protein localises to the cytoplasm. The catalysed reaction is tRNA(Cys) + L-cysteine + ATP = L-cysteinyl-tRNA(Cys) + AMP + diphosphate. This Bacillus cereus (strain AH187) protein is Cysteine--tRNA ligase.